A 430-amino-acid chain; its full sequence is 3-phosphoshikimate 1-carboxyvinyltransferase (430 aa).

Residues lysine 23, serine 24, and arginine 28 each coordinate 3-phosphoshikimate. Lysine 23 contacts phosphoenolpyruvate. Residues glycine 95 and arginine 123 each coordinate phosphoenolpyruvate. Residues serine 169, glutamine 171, aspartate 315, and lysine 342 each coordinate 3-phosphoshikimate. Glutamine 171 provides a ligand contact to phosphoenolpyruvate. The Proton acceptor role is filled by aspartate 315. Phosphoenolpyruvate is bound by residues arginine 346 and arginine 388.

The protein belongs to the EPSP synthase family. Monomer.

It localises to the cytoplasm. The enzyme catalyses 3-phosphoshikimate + phosphoenolpyruvate = 5-O-(1-carboxyvinyl)-3-phosphoshikimate + phosphate. The protein operates within metabolic intermediate biosynthesis; chorismate biosynthesis; chorismate from D-erythrose 4-phosphate and phosphoenolpyruvate: step 6/7. Functionally, catalyzes the transfer of the enolpyruvyl moiety of phosphoenolpyruvate (PEP) to the 5-hydroxyl of shikimate-3-phosphate (S3P) to produce enolpyruvyl shikimate-3-phosphate and inorganic phosphate. The polypeptide is 3-phosphoshikimate 1-carboxyvinyltransferase (Streptococcus pyogenes serotype M3 (strain ATCC BAA-595 / MGAS315)).